The primary structure comprises 366 residues: Beta sliding clamp (366 aa).

This sequence belongs to the beta sliding clamp family. Forms a ring-shaped head-to-tail homodimer around DNA which binds and tethers DNA polymerases and other proteins to the DNA. The DNA replisome complex has a single clamp-loading complex (3 tau and 1 each of delta, delta', psi and chi subunits) which binds 3 Pol III cores (1 core on the leading strand and 2 on the lagging strand) each with a beta sliding clamp dimer. Additional proteins in the replisome are other copies of gamma, psi and chi, Ssb, DNA helicase and RNA primase.

The protein resides in the cytoplasm. In terms of biological role, confers DNA tethering and processivity to DNA polymerases and other proteins. Acts as a clamp, forming a ring around DNA (a reaction catalyzed by the clamp-loading complex) which diffuses in an ATP-independent manner freely and bidirectionally along dsDNA. Initially characterized for its ability to contact the catalytic subunit of DNA polymerase III (Pol III), a complex, multichain enzyme responsible for most of the replicative synthesis in bacteria; Pol III exhibits 3'-5' exonuclease proofreading activity. The beta chain is required for initiation of replication as well as for processivity of DNA replication. This Buchnera aphidicola subsp. Acyrthosiphon pisum (strain APS) (Acyrthosiphon pisum symbiotic bacterium) protein is Beta sliding clamp (dnaN).